A 188-amino-acid polypeptide reads, in one-letter code: Elongation factor P (188 aa).

Belongs to the elongation factor P family.

Its subcellular location is the cytoplasm. Its pathway is protein biosynthesis; polypeptide chain elongation. Functionally, involved in peptide bond synthesis. Stimulates efficient translation and peptide-bond synthesis on native or reconstituted 70S ribosomes in vitro. Probably functions indirectly by altering the affinity of the ribosome for aminoacyl-tRNA, thus increasing their reactivity as acceptors for peptidyl transferase. The protein is Elongation factor P of Azotobacter vinelandii (strain DJ / ATCC BAA-1303).